A 398-amino-acid chain; its full sequence is Nocardicin C N-oxygenase (398 aa).

The disordered stretch occupies residues 63 to 90 (RARAAGREETPRVTPEAAPAGSMLSMDP). Heme contacts are provided by H93, R97, R289, H345, and C347.

The protein belongs to the cytochrome P450 family. It depends on heme as a cofactor.

The enzyme catalyses nocardicin C + 4 reduced [2Fe-2S]-[ferredoxin] + 2 O2 + 2 H(+) = nocardicin A + 4 oxidized [2Fe-2S]-[ferredoxin] + 3 H2O. It participates in antibiotic biosynthesis. Its function is as follows. Involved in the biosynthesis of the beta-lactam antibiotic nocardicin A. Catalyzes the conversion of nocardicin C to nocardicin A. Cannot use nocardicin G. The polypeptide is Nocardicin C N-oxygenase (Nocardia uniformis subsp. tsuyamanensis).